The primary structure comprises 240 residues: tRNA (guanine-N(1)-)-methyltransferase (240 aa).

S-adenosyl-L-methionine is bound by residues glycine 112 and leucine 132 to leucine 137.

This sequence belongs to the RNA methyltransferase TrmD family. As to quaternary structure, homodimer.

The protein resides in the cytoplasm. The catalysed reaction is guanosine(37) in tRNA + S-adenosyl-L-methionine = N(1)-methylguanosine(37) in tRNA + S-adenosyl-L-homocysteine + H(+). Functionally, specifically methylates guanosine-37 in various tRNAs. In Cyanothece sp. (strain PCC 7425 / ATCC 29141), this protein is tRNA (guanine-N(1)-)-methyltransferase.